The chain runs to 528 residues: MNLTELEEIGLKNVGKVYHNLGYDELIKHEIENKECILTTSGATAVDTGVFTGRSPKDKYIVDRDPSNRYIAWGDVNQKVSEEIFKELLEVAREQLSAKDLYVTDVYSGASVDSKHSIRFVTEIAWQAHFVKNMFIRPTELELKEFKPQFTVLNACKAVNDKWREHGLNSEVFVLFDIENNLSVIGGTWYGGELKKGIFSMMNYWLPLQNKLSMHCSANVGEKGDTALFFGLSGTGKTTLSTDPYRRLIGDDEHGWDDNGVFNFEGGCYAKVINLDGNNEPEIFNAIKSGALLENVVVNDKGEVDYNDGSKTENTRVSYPIEHIKNHETSLSAGHPENIIFLSADAFGILPPVSKLTREQAMYYFLSGYTAKVAGTERGITKPVATFSSCFGEAFLPLHPTVYAKLLGEKIDKHDVHVYLVNTGWTGGAYGVGTRMSIKDTRACINAILDGSIKESEFDTTKTFKLQVPKTLGNINPEILNPRNAWSDKEAFDKTTDMLANMFNENFKKYQVENSEFDYSEAGPKIES.

The substrate site is built by R54, Y190, and K196. ATP is bound by residues K196, H215, and 231-239; that span reads GLSGTGKTT. Residues K196 and H215 each coordinate Mn(2+). D252 is a binding site for Mn(2+). ATP contacts are provided by E280, R316, and T441. R316 lines the substrate pocket.

It belongs to the phosphoenolpyruvate carboxykinase (ATP) family. Requires Mn(2+) as cofactor.

Its subcellular location is the cytoplasm. It carries out the reaction oxaloacetate + ATP = phosphoenolpyruvate + ADP + CO2. It participates in carbohydrate biosynthesis; gluconeogenesis. Involved in the gluconeogenesis. Catalyzes the conversion of oxaloacetate (OAA) to phosphoenolpyruvate (PEP) through direct phosphoryl transfer between the nucleoside triphosphate and OAA. This Sulfurimonas denitrificans (strain ATCC 33889 / DSM 1251) (Thiomicrospira denitrificans (strain ATCC 33889 / DSM 1251)) protein is Phosphoenolpyruvate carboxykinase (ATP).